The sequence spans 245 residues: MILFPAIDLKNGQCVRLEQGDMARATVFNLDPAAQARSFAAQGFQYLHVVDLDGAFAGKPVNAQAVESMLKVVSMPVQLGGGIRDLKTVEGWLAKGISRVIIGTAAVRDPALVKQAAKKFPGRVAVGLDARDGKVAVEGWAESSQVTALEIAQRFEDAGVAAIIFTDIARDGLLKGINWEATIALAEAVSIPVIASGGLASIDDVKALLSPRANKLEGAIAGRALYDGRLDPAEALALIDAARAA.

Catalysis depends on Asp8, which acts as the Proton acceptor. The Proton donor role is filled by Asp129.

Belongs to the HisA/HisF family.

The protein localises to the cytoplasm. The catalysed reaction is 1-(5-phospho-beta-D-ribosyl)-5-[(5-phospho-beta-D-ribosylamino)methylideneamino]imidazole-4-carboxamide = 5-[(5-phospho-1-deoxy-D-ribulos-1-ylimino)methylamino]-1-(5-phospho-beta-D-ribosyl)imidazole-4-carboxamide. The protein operates within amino-acid biosynthesis; L-histidine biosynthesis; L-histidine from 5-phospho-alpha-D-ribose 1-diphosphate: step 4/9. This is 1-(5-phosphoribosyl)-5-[(5-phosphoribosylamino)methylideneamino] imidazole-4-carboxamide isomerase from Rhodopseudomonas palustris (strain BisB5).